The following is a 406-amino-acid chain: Alpha-1-antitrypsin (406 aa).

The N-terminal stretch at 1 to 24 (MTSSISWGLLLLAGLCCLVPSFLA) is a signal peptide. Residue S33 is modified to Phosphoserine. N-linked (GlcNAc...) asparagine glycosylation is found at N59, N96, and N260. The segment at 362 to 381 (GTTVLEAVPMSIPPDVCFKN) is RCL. S372 carries the post-translational modification Phosphoserine.

Belongs to the serpin family. In terms of assembly, interacts with CELA2A. Interacts with ERGIC3 and LMAN1/ERGIC53. Interacts with PRSS1/Trypsin. In terms of tissue distribution, plasma.

Its subcellular location is the secreted. Inhibitor of serine proteases. Can inhibit elastase, trypsin, chymotrypsin and plasmin. The polypeptide is Alpha-1-antitrypsin (Meriones unguiculatus (Mongolian jird)).